The following is a 423-amino-acid chain: MDQTLQQHGPVDLAFTAPPSKSFTHRALIIAALADGESLIRGPLIAEDTLLTVRALQALGADITDTPEGYRVQGTDGRPDCAEGTVLDLKNSGTSLRLLSSIALLCSSTAGVTLTGSPRMQQRPIGELGDAIRTLGGSVRYLAADGYPPCVVQGPLVGGEATLDGSVSSQFISSLLLAAPYAVRPVDLKVARQPVSRSYLEITGAVMAAFGVPVRRVGYTHFTVQPARYRGREYTVEGDYSSASYFFALAATLGGKVTVRNLNHDSVQGDRLFVAALKAMGCRVTRETDGVTIERTKNLHGISIDMTTAPDTVQTLAVVAALADSPTTITGVGHLQYKESDRVAVTAGTLRALGCTVDISADAITIHPGPLHGGVIDPHDDHRTAMAFAVLGLAVGDVTIEDPACVGKSFPKFWNALAAGGLL.

Lys21, Ser22, and Arg26 together coordinate 3-phosphoshikimate. Residue Lys21 participates in phosphoenolpyruvate binding. Positions 93 and 123 each coordinate phosphoenolpyruvate. The 3-phosphoshikimate site is built by Ser168, Ser169, Gln170, Ser196, Asp311, and Lys338. Gln170 serves as a coordination point for phosphoenolpyruvate. Asp311 functions as the Proton acceptor in the catalytic mechanism. Phosphoenolpyruvate-binding residues include Arg342, Arg383, and Lys408.

Belongs to the EPSP synthase family. Monomer.

The protein localises to the cytoplasm. It catalyses the reaction 3-phosphoshikimate + phosphoenolpyruvate = 5-O-(1-carboxyvinyl)-3-phosphoshikimate + phosphate. The protein operates within metabolic intermediate biosynthesis; chorismate biosynthesis. Functionally, catalyzes the transfer of the enolpyruvyl moiety of phosphoenolpyruvate (PEP) to the 5-hydroxyl of shikimate-3-phosphate (S3P) to produce enolpyruvyl shikimate-3-phosphate and inorganic phosphate. The protein is 3-phosphoshikimate 1-carboxyvinyltransferase of Methanosphaerula palustris (strain ATCC BAA-1556 / DSM 19958 / E1-9c).